A 477-amino-acid polypeptide reads, in one-letter code: Argininosuccinate lyase (477 aa).

The protein belongs to the lyase 1 family. Argininosuccinate lyase subfamily.

It localises to the cytoplasm. It carries out the reaction 2-(N(omega)-L-arginino)succinate = fumarate + L-arginine. It participates in amino-acid biosynthesis; L-arginine biosynthesis; L-arginine from L-ornithine and carbamoyl phosphate: step 3/3. This chain is Argininosuccinate lyase, found in Acinetobacter baumannii (strain ACICU).